The sequence spans 314 residues: DNA topoisomerase 1B (314 aa).

The Topo IB-type catalytic domain maps to 77-314 (VQNRNAKRDR…VDHVKSSTDG (238 aa)). Residue Y274 is the O-(3'-phospho-DNA)-tyrosine intermediate of the active site.

The protein belongs to the type IB topoisomerase family.

It catalyses the reaction ATP-independent breakage of single-stranded DNA, followed by passage and rejoining.. Releases the supercoiling and torsional tension of DNA introduced during the DNA replication and transcription by transiently cleaving and rejoining one strand of the DNA duplex. Introduces a single-strand break via transesterification at the specific target site 5'-[CT]CCTTp site in duplex DNA. The scissile phosphodiester is attacked by the catalytic tyrosine of the enzyme, resulting in the formation of a DNA-(3'-phosphotyrosyl)-enzyme intermediate and the expulsion of a 5'-OH DNA strand. The free DNA strand then undergoes passage around the unbroken strand thus removing DNA supercoils. Finally, in the religation step, the DNA 5'-OH attacks the covalent intermediate to expel the active-site tyrosine and restore the DNA phosphodiester backbone. The polypeptide is DNA topoisomerase 1B (TOP1) (Vaccinia virus (strain Ankara) (VACV)).